The primary structure comprises 74 residues: Translation initiation factor IF-1 2 (74 aa).

The 73-residue stretch at 1–73 folds into the S1-like domain; it reads MTKNKNVIEV…TRGRIVFRYR (73 aa).

The protein belongs to the IF-1 family. As to quaternary structure, component of the 30S ribosomal translation pre-initiation complex which assembles on the 30S ribosome in the order IF-2 and IF-3, IF-1 and N-formylmethionyl-tRNA(fMet); mRNA recruitment can occur at any time during PIC assembly.

It localises to the cytoplasm. Functionally, one of the essential components for the initiation of protein synthesis. Stabilizes the binding of IF-2 and IF-3 on the 30S subunit to which N-formylmethionyl-tRNA(fMet) subsequently binds. Helps modulate mRNA selection, yielding the 30S pre-initiation complex (PIC). Upon addition of the 50S ribosomal subunit IF-1, IF-2 and IF-3 are released leaving the mature 70S translation initiation complex. This is Translation initiation factor IF-1 2 from Streptomyces avermitilis (strain ATCC 31267 / DSM 46492 / JCM 5070 / NBRC 14893 / NCIMB 12804 / NRRL 8165 / MA-4680).